Consider the following 236-residue polypeptide: uncharacterized protein (236 aa).

It localises to the plastid. The protein resides in the chloroplast. This is an uncharacterized protein from Chlorella vulgaris (Green alga).